We begin with the raw amino-acid sequence, 343 residues long: MSILIENISKTFGTFRALDHVNLEVKAGSLVALVGPSGSGKSTLLRMIAGLERADEGKIWLAGRDATYAPIQKRHIGFVFQNYALFKHLNVAKNISFGLEVRQANPNQIRSRVRDLLQLIQLEHMADRYPAQLSGGQRQRVALARALAVEPKVLLLDEPFGALDARVRRELRSWLRDLHQEMPVTTVFVTHDQQEAMEVAHEIVVFNQGRLEQVGSPQEIYDHPATPFVMGFMGHINHGVDDVQQSSYFVRPNDVIIQLVPSTNSLSGKVVGMTYGDTSMKLDVDIPQQVPSSDWAPRGSLWRIHLSRRDFNQFNSMLVGGIQIGSVLYVQPRRTEMVRGYSI.

The region spanning 3–233 (ILIENISKTF…PATPFVMGFM (231 aa)) is the ABC transporter domain. An ATP-binding site is contributed by 35 to 42 (GPSGSGKS).

This sequence belongs to the ABC transporter superfamily. Sulfate/tungstate importer (TC 3.A.1.6) family.

It localises to the plastid. The protein localises to the chloroplast. The enzyme catalyses sulfate(out) + ATP + H2O = sulfate(in) + ADP + phosphate + H(+). The catalysed reaction is thiosulfate(out) + ATP + H2O = thiosulfate(in) + ADP + phosphate + H(+). Its function is as follows. Part of the ABC transporter complex involved in sulfate/thiosulfate import. Responsible for energy coupling to the transport system. This Nephroselmis olivacea (Green alga) protein is Sulfate/thiosulfate import ATP-binding protein CysA.